A 205-amino-acid polypeptide reads, in one-letter code: Small ribosomal subunit protein uS4 (205 aa).

The disordered stretch occupies residues 1 to 44; the sequence is MSKRHSQKYKIDRRMGENLWGRPKSPVNSRSYGPGQHGQRRKTK. An S4 RNA-binding domain is found at 94–173; the sequence is SRLDAIVYRC…LPEYIDLDAK (80 aa).

The protein belongs to the universal ribosomal protein uS4 family. As to quaternary structure, part of the 30S ribosomal subunit. Contacts protein S5. The interaction surface between S4 and S5 is involved in control of translational fidelity.

Its function is as follows. One of the primary rRNA binding proteins, it binds directly to 16S rRNA where it nucleates assembly of the body of the 30S subunit. With S5 and S12 plays an important role in translational accuracy. The polypeptide is Small ribosomal subunit protein uS4 (Maricaulis maris (strain MCS10) (Caulobacter maris)).